A 180-amino-acid polypeptide reads, in one-letter code: Inner membrane assembly complex subunit 17 (180 aa).

Residues 1-36 (MMIRNQLYRKCIIGGGRSILNGWVINGTVPNIGLRY) constitute a mitochondrion transit peptide. Residues 37-105 (LRSGIVTRSN…RKTQDIPIKR (69 aa)) are Mitochondrial matrix-facing. The helical transmembrane segment at 106–128 (FIRPTWMFLLMSSTFYLLGHYIW) threads the bilayer. Positions 129–163 (WKLEYDEVEKELDRQVTALEEELHNLIEEHRVHGE) form a coiled coil. Residues 129–180 (WKLEYDEVEKELDRQVTALEEELHNLIEEHRVHGENEAIKNKKHKHWYKFWS) lie on the Mitochondrial intermembrane side of the membrane.

This sequence belongs to the INA17 family. As to quaternary structure, component of the inner membrane assembly (INA) complex, composed of INA17 and INA22. Interacts with a subset of F(1)F(0)-ATP synthase subunits of the F(1)-domain and the peripheral stalk.

Its subcellular location is the mitochondrion inner membrane. Component of the INA complex (INAC) that promotes the biogenesis of mitochondrial F(1)F(0)-ATP synthase. INAC facilitates the assembly of the peripheral stalk and promotes the assembly of the catalytic F(1)-domain with the membrane-embedded F(0)-domain. This Vanderwaltozyma polyspora (strain ATCC 22028 / DSM 70294 / BCRC 21397 / CBS 2163 / NBRC 10782 / NRRL Y-8283 / UCD 57-17) (Kluyveromyces polysporus) protein is Inner membrane assembly complex subunit 17.